Here is a 191-residue protein sequence, read N- to C-terminus: Protein Ves (191 aa).

The protein belongs to the Ves family.

The chain is Protein Ves from Shigella flexneri serotype 5b (strain 8401).